Here is a 772-residue protein sequence, read N- to C-terminus: Alpha-xylosidase (772 aa).

Catalysis depends on D416, which acts as the Nucleophile. The active site involves E419. The active-site Proton donor is the D482.

This sequence belongs to the glycosyl hydrolase 31 family. Homohexamer.

It carries out the reaction Hydrolysis of terminal, non-reducing alpha-D-xylose residues with release of alpha-D-xylose.. Its function is as follows. Can catalyze the transfer of alpha-xylosyl residue from alpha-xyloside to xylose, glucose, mannose, fructose, maltose, isomaltose, nigerose, kojibiose, sucrose and trehalose. In Escherichia coli (strain K12), this protein is Alpha-xylosidase (yicI).